Reading from the N-terminus, the 468-residue chain is Mannan endo-1,4-beta-mannosidase 3 (468 aa).

A signal peptide spans 1–23 (MTVRPRPAAAAIIIAAVFGAAAA). Position 86 (tryptophan 86) interacts with substrate. Residue asparagine 152 is glycosylated (N-linked (GlcNAc...) asparagine). Residue asparagine 201 participates in substrate binding. The active-site Proton donor is glutamate 202. A substrate-binding site is contributed by tyrosine 281. N-linked (GlcNAc...) asparagine glycosylation is present at asparagine 300. Glutamate 321 functions as the Nucleophile in the catalytic mechanism. Residue asparagine 333 is glycosylated (N-linked (GlcNAc...) asparagine). Positions 364 and 371 each coordinate substrate. The segment at 415-436 (LRRRRRRPASSHRKTRLGSGGD) is disordered. The span at 416 to 430 (RRRRRRPASSHRKTR) shows a compositional bias: basic residues.

It belongs to the glycosyl hydrolase 5 (cellulase A) family. Expressed in seeds.

The protein localises to the secreted. It catalyses the reaction Random hydrolysis of (1-&gt;4)-beta-D-mannosidic linkages in mannans, galactomannans and glucomannans.. This is Mannan endo-1,4-beta-mannosidase 3 (MAN3) from Oryza sativa subsp. japonica (Rice).